A 148-amino-acid polypeptide reads, in one-letter code: Protein SOB FIVE-LIKE 1 (148 aa).

Basic and acidic residues predominate over residues 1–10 (MESPRNHGGS). Disordered stretches follow at residues 1–20 (MESP…SCES) and 33–148 (NDQS…SKTK). The SOFL-A motif lies at 20-25 (SGWTMY). The segment covering 54–76 (DGYENDDGDTSDDGGDEESDDSM) has biased composition (acidic residues). Residues 75–84 (SMASDASSGP) carry the SOFL-B motif. Over residues 91–101 (HINKHAARKNG) the composition is skewed to basic residues. A compositionally biased stretch (basic and acidic residues) spans 111-128 (QHTEKTISNEGEKSDLKA).

Belongs to the SOFL plant protein family. In terms of tissue distribution, predominantly expressed in the vascular tissues of seedlings, developing leaves, flowers and siliques, but barely detectable in roots and stems.

The protein resides in the cytoplasm. Its subcellular location is the nucleus. Functionally, involved in cytokinin-mediated development. Together with SOFL2, triggers the endogenous content of specific bioactive cytokinins derived from the biosynthetic intermediates trans-zeatin riboside monophosphate (tZRMP) and N(6)-(Delta(2)-isopentenyl)adenosine monophosphate (iPRMP) such as N-glucosides trans-zeatin 7-glucoside (tZ7G), cis-zeatin 7-glucoside (cZ7G) and N(6)-(Delta(2)-isopentenyl)adenine 7-glucoside (iP7G). The polypeptide is Protein SOB FIVE-LIKE 1 (Arabidopsis thaliana (Mouse-ear cress)).